Here is a 142-residue protein sequence, read N- to C-terminus: Large ribosomal subunit protein uL11 (142 aa).

This sequence belongs to the universal ribosomal protein uL11 family. As to quaternary structure, part of the ribosomal stalk of the 50S ribosomal subunit. Interacts with L10 and the large rRNA to form the base of the stalk. L10 forms an elongated spine to which L12 dimers bind in a sequential fashion forming a multimeric L10(L12)X complex. Post-translationally, one or more lysine residues are methylated.

Forms part of the ribosomal stalk which helps the ribosome interact with GTP-bound translation factors. The polypeptide is Large ribosomal subunit protein uL11 (Edwardsiella ictaluri (strain 93-146)).